We begin with the raw amino-acid sequence, 2290 residues long: Protein Ycf2 (2290 aa).

1644 to 1651 (GSIGTGRS) provides a ligand contact to ATP.

It belongs to the Ycf2 family.

The protein resides in the plastid. It is found in the chloroplast stroma. Probable ATPase of unknown function. Its presence in a non-photosynthetic plant (Epifagus virginiana) and experiments in tobacco indicate that it has an essential function which is probably not related to photosynthesis. The sequence is that of Protein Ycf2 from Barbarea verna (Land cress).